A 286-amino-acid chain; its full sequence is 4-hydroxy-tetrahydrodipicolinate synthase (286 aa).

Thr42 provides a ligand contact to pyruvate. Tyr129 serves as the catalytic Proton donor/acceptor. The Schiff-base intermediate with substrate role is filled by Lys157. Ile196 serves as a coordination point for pyruvate.

The protein belongs to the DapA family. In terms of assembly, homotetramer; dimer of dimers.

Its subcellular location is the cytoplasm. It catalyses the reaction L-aspartate 4-semialdehyde + pyruvate = (2S,4S)-4-hydroxy-2,3,4,5-tetrahydrodipicolinate + H2O + H(+). It participates in amino-acid biosynthesis; L-lysine biosynthesis via DAP pathway; (S)-tetrahydrodipicolinate from L-aspartate: step 3/4. Its function is as follows. Catalyzes the condensation of (S)-aspartate-beta-semialdehyde [(S)-ASA] and pyruvate to 4-hydroxy-tetrahydrodipicolinate (HTPA). This is 4-hydroxy-tetrahydrodipicolinate synthase from Chlamydia trachomatis serovar A (strain ATCC VR-571B / DSM 19440 / HAR-13).